A 221-amino-acid chain; its full sequence is Stromal cell-derived factor 2-like protein 1 (221 aa).

The signal sequence occupies residues 1–28 (MWSAGSGRAAGPALLGILLALSLSGGRA). 3 MIR domains span residues 33–87 (AGLV…IRGG), 95–150 (GSPV…VRCS), and 151–205 (GQHW…AMEG). Positions 218-221 (HDEL) match the Prevents secretion from ER motif.

The protein resides in the endoplasmic reticulum lumen. This is Stromal cell-derived factor 2-like protein 1 (SDF2L1) from Bos taurus (Bovine).